A 126-amino-acid polypeptide reads, in one-letter code: Large ribosomal subunit protein eL14 (126 aa).

This sequence belongs to the eukaryotic ribosomal protein eL14 family.

The chain is Large ribosomal subunit protein eL14 (RPL14) from Tetrahymena thermophila (strain SB210).